The primary structure comprises 1019 residues: Sca1 complex protein phr (1019 aa).

Disordered regions lie at residues 89–118 (IVINSSSSSSSSSSHHPHHQKTPSNSSSNF), 131–202 (AFNN…INNN), 265–287 (QQLNQNGGSNNGSTSNSTSNSAN), and 512–546 (STNNNNSGNNSNNNNGNSNGNSSNNNSNNNSTNNL). The segment covering 93-102 (SSSSSSSSSS) has biased composition (low complexity). Positions 141-155 (NRKEKEKDKDKDHQD) are enriched in basic and acidic residues. A coiled-coil region spans residues 158–188 (NINNINNINNNINNNINNNNNNNNNNNNNNN). Over residues 158 to 202 (NINNINNINNNINNNINNNNNNNNNNNNNNNMHNPTSSSPSINNN) the composition is skewed to low complexity. In terms of domain architecture, PH spans 735 to 836 (EIKKKGYLFK…WIKAIKFNCF (102 aa)). A compositionally biased stretch (low complexity) spans 860-872 (VAGSGSNNGNNNG). 3 disordered regions span residues 860 to 890 (VAGSGSNNGNNNGHLKRSDTTQQLNNSGSFI), 904 to 951 (NLSI…QQQL), and 977 to 1019 (SSYT…SKLK). Over residues 879 to 890 (TTQQLNNSGSFI) the composition is skewed to polar residues. Residues 977–986 (SSYTDSMSGS) show a composition bias toward low complexity. Polar residues predominate over residues 987-1019 (PPDSNGQVFPQSPQLKKTLFQRTTSFSKGSKLK).

Component of the Sca1 complex composed of at least gefA, gefH, scaA, phr, and the protein phosphatase 2A subunits pppA and pho2B. Interacts directly with gefH.

It localises to the cell membrane. Its function is as follows. Component of the Sca1 complex, a regulator of cell motility, chemotaxis and signal relay. The Sca1 complex is recruited to the plasma membrane in a chemoattractant- and F-actin-dependent manner and is enriched at the leading edge of chemotaxing cells where it regulates F-actin dynamics and signal relay by controlling the activation of rasC and the downstream target of rapamycin complex 2 (TORC2)-Akt/protein kinase B (PKB) pathway. In Dictyostelium discoideum (Social amoeba), this protein is Sca1 complex protein phr.